Reading from the N-terminus, the 278-residue chain is Tryptophan synthase alpha chain (278 aa).

Catalysis depends on proton acceptor residues glutamate 50 and aspartate 61.

This sequence belongs to the TrpA family. In terms of assembly, tetramer of two alpha and two beta chains.

It catalyses the reaction (1S,2R)-1-C-(indol-3-yl)glycerol 3-phosphate + L-serine = D-glyceraldehyde 3-phosphate + L-tryptophan + H2O. It functions in the pathway amino-acid biosynthesis; L-tryptophan biosynthesis; L-tryptophan from chorismate: step 5/5. Its function is as follows. The alpha subunit is responsible for the aldol cleavage of indoleglycerol phosphate to indole and glyceraldehyde 3-phosphate. The chain is Tryptophan synthase alpha chain from Rhodopseudomonas palustris (strain BisA53).